Reading from the N-terminus, the 157-residue chain is 2-C-methyl-D-erythritol 2,4-cyclodiphosphate synthase (157 aa).

Residues Asp8, His10, and His42 each coordinate a divalent metal cation. 8-10 (DVH) is a binding site for 4-CDP-2-C-methyl-D-erythritol 2-phosphate. 4-CDP-2-C-methyl-D-erythritol 2-phosphate is bound by residues 56–58 (DIG), 132–135 (STSE), Phe139, and Arg142.

The protein belongs to the IspF family. As to quaternary structure, homotrimer. It depends on a divalent metal cation as a cofactor.

The enzyme catalyses 4-CDP-2-C-methyl-D-erythritol 2-phosphate = 2-C-methyl-D-erythritol 2,4-cyclic diphosphate + CMP. Its pathway is isoprenoid biosynthesis; isopentenyl diphosphate biosynthesis via DXP pathway; isopentenyl diphosphate from 1-deoxy-D-xylulose 5-phosphate: step 4/6. Its function is as follows. Involved in the biosynthesis of isopentenyl diphosphate (IPP) and dimethylallyl diphosphate (DMAPP), two major building blocks of isoprenoid compounds. Catalyzes the conversion of 4-diphosphocytidyl-2-C-methyl-D-erythritol 2-phosphate (CDP-ME2P) to 2-C-methyl-D-erythritol 2,4-cyclodiphosphate (ME-CPP) with a corresponding release of cytidine 5-monophosphate (CMP). The sequence is that of 2-C-methyl-D-erythritol 2,4-cyclodiphosphate synthase from Dehalococcoides mccartyi (strain CBDB1).